The sequence spans 245 residues: Ribosomal RNA small subunit methyltransferase J (245 aa).

S-adenosyl-L-methionine contacts are provided by residues 94–95 (RD), 110–111 (ER), and Asp164.

This sequence belongs to the methyltransferase superfamily. RsmJ family.

It localises to the cytoplasm. It carries out the reaction guanosine(1516) in 16S rRNA + S-adenosyl-L-methionine = N(2)-methylguanosine(1516) in 16S rRNA + S-adenosyl-L-homocysteine + H(+). Functionally, specifically methylates the guanosine in position 1516 of 16S rRNA. The protein is Ribosomal RNA small subunit methyltransferase J of Dechloromonas aromatica (strain RCB).